A 238-amino-acid chain; its full sequence is Flagellar L-ring protein (238 aa).

The N-terminal stretch at 1–17 is a signal peptide; that stretch reads MKRRLLAAGCAMLLLSG. The N-palmitoyl cysteine moiety is linked to residue Cys18. The S-diacylglycerol cysteine moiety is linked to residue Cys18. The tract at residues 22-50 is disordered; the sequence is RQQPSPVPPVTQPQAYAEPEDTAANPGSL.

It belongs to the FlgH family. As to quaternary structure, the basal body constitutes a major portion of the flagellar organelle and consists of four rings (L,P,S, and M) mounted on a central rod.

The protein resides in the cell outer membrane. It localises to the bacterial flagellum basal body. Functionally, assembles around the rod to form the L-ring and probably protects the motor/basal body from shearing forces during rotation. The chain is Flagellar L-ring protein from Nitratidesulfovibrio vulgaris (strain DSM 19637 / Miyazaki F) (Desulfovibrio vulgaris).